Here is a 362-residue protein sequence, read N- to C-terminus: Dihydroorotate dehydrogenase (quinone) (362 aa).

Residues 62-66 and threonine 86 each bind FMN; that span reads AGYDK. Lysine 66 contacts substrate. A substrate-binding site is contributed by 111 to 115; it reads NRLGF. FMN-binding residues include asparagine 139 and asparagine 170. Residue asparagine 170 participates in substrate binding. Serine 173 (nucleophile) is an active-site residue. Residue asparagine 175 coordinates substrate. Residues lysine 215 and serine 243 each contribute to the FMN site. Position 244 to 245 (244 to 245) interacts with substrate; that stretch reads NT. FMN is bound by residues glycine 266, glycine 295, and 316-317; that span reads YS.

The protein belongs to the dihydroorotate dehydrogenase family. Type 2 subfamily. As to quaternary structure, monomer. The cofactor is FMN.

Its subcellular location is the cell membrane. It catalyses the reaction (S)-dihydroorotate + a quinone = orotate + a quinol. The protein operates within pyrimidine metabolism; UMP biosynthesis via de novo pathway; orotate from (S)-dihydroorotate (quinone route): step 1/1. Functionally, catalyzes the conversion of dihydroorotate to orotate with quinone as electron acceptor. The protein is Dihydroorotate dehydrogenase (quinone) of Rhizobium johnstonii (strain DSM 114642 / LMG 32736 / 3841) (Rhizobium leguminosarum bv. viciae).